The chain runs to 141 residues: Hemoglobin subunit alpha (141 aa).

The region spanning 1–141 (VLSPADKTNV…VSTVLTSKYR (141 aa)) is the Globin domain. Ser3 is modified (phosphoserine). Position 7 is an N6-succinyllysine (Lys7). At Thr8 the chain carries Phosphothreonine. Lys11 bears the N6-succinyllysine mark. N6-acetyllysine; alternate is present on Lys16. Position 16 is an N6-succinyllysine; alternate (Lys16). Position 24 is a phosphotyrosine (Tyr24). The residue at position 35 (Ser35) is a Phosphoserine. An N6-succinyllysine modification is found at Lys40. Residue Ser49 is modified to Phosphoserine. His58 provides a ligand contact to O2. His87 is a heme b binding site. Phosphoserine is present on Ser102. At Thr108 the chain carries Phosphothreonine. Phosphoserine occurs at positions 124 and 131. A phosphothreonine mark is found at Thr134 and Thr137. Phosphoserine is present on Ser138.

Belongs to the globin family. Heterotetramer of two alpha chains and two beta chains. Red blood cells.

Involved in oxygen transport from the lung to the various peripheral tissues. Functionally, hemopressin acts as an antagonist peptide of the cannabinoid receptor CNR1. Hemopressin-binding efficiently blocks cannabinoid receptor CNR1 and subsequent signaling. This is Hemoglobin subunit alpha (HBA) from Taphozous georgianus (Sharp-nosed tomb bat).